The sequence spans 227 residues: MVYAIIVAAGEGKRAGFEIPKQFVKLNNKTILRMSAEKFQNSASIDKFLVVSHRNYVDLTEKEVKIFSKFENVVIGGSNRQESVYNALMYLGKKENKPDFVCIHDAVRPFVDTNKIDESIYKAKEIGGAVLAEMAENTISQVNNGRIVKTLERSQIYLHHTPQTFDFNKLLKAYQKAEKILSSFTDDASIFIHAGYETAIVEDYKNNIKLTKKEDFELAKCIFELNS.

It belongs to the IspD/TarI cytidylyltransferase family. IspD subfamily.

The enzyme catalyses 2-C-methyl-D-erythritol 4-phosphate + CTP + H(+) = 4-CDP-2-C-methyl-D-erythritol + diphosphate. The protein operates within isoprenoid biosynthesis; isopentenyl diphosphate biosynthesis via DXP pathway; isopentenyl diphosphate from 1-deoxy-D-xylulose 5-phosphate: step 2/6. Its function is as follows. Catalyzes the formation of 4-diphosphocytidyl-2-C-methyl-D-erythritol from CTP and 2-C-methyl-D-erythritol 4-phosphate (MEP). The sequence is that of 2-C-methyl-D-erythritol 4-phosphate cytidylyltransferase from Petrotoga mobilis (strain DSM 10674 / SJ95).